Reading from the N-terminus, the 177-residue chain is Ribonuclease clavin (177 aa).

Positions 1–27 (MVAIKNLVLVALTAVTALAMPSPLEER) are cleaved as a signal peptide. 2 disulfide bridges follow: Cys33/Cys175 and Cys103/Cys159. The active site involves His77. The disordered stretch occupies residues 98-117 (WGNSDCDRPPKHSKNGDGKN). Basic and acidic residues predominate over residues 102-117 (DCDRPPKHSKNGDGKN). The Proton acceptor role is filled by Glu123. Residue His164 is the Proton donor of the active site.

The protein belongs to the ribonuclease U2 family.

The protein localises to the secreted. In terms of biological role, clavin has the same substrate specificity as alpha-sarcin. It is specific for purines in both single- and double-stranded RNA. Its toxic action on eukaryotic cells is the result of cleavage of a single phosphodiester bond in the 60S subunit of ribosomes. In Aspergillus clavatus (strain ATCC 1007 / CBS 513.65 / DSM 816 / NCTC 3887 / NRRL 1 / QM 1276 / 107), this protein is Ribonuclease clavin (cla).